A 790-amino-acid polypeptide reads, in one-letter code: Phenylalanine--tRNA ligase beta subunit (790 aa).

Residues 39 to 147 (AKPFSGIVVG…ADAPVGVDVR (109 aa)) form the tRNA-binding domain. The B5 domain occupies 400-476 (PAKALVNLRH…RLYGYNKLPV (77 aa)). Residues Asp-454, Asp-460, Glu-463, and Glu-464 each coordinate Mg(2+). One can recognise an FDX-ACB domain in the interval 696–789 (SRFPEIRRDL…LGNRFGASLR (94 aa)).

It belongs to the phenylalanyl-tRNA synthetase beta subunit family. Type 1 subfamily. In terms of assembly, tetramer of two alpha and two beta subunits. The cofactor is Mg(2+).

It localises to the cytoplasm. The enzyme catalyses tRNA(Phe) + L-phenylalanine + ATP = L-phenylalanyl-tRNA(Phe) + AMP + diphosphate + H(+). The protein is Phenylalanine--tRNA ligase beta subunit of Hahella chejuensis (strain KCTC 2396).